A 393-amino-acid polypeptide reads, in one-letter code: Sialyltransferase-like protein 1 (393 aa).

The Cytoplasmic segment spans residues 1–8 (MKRPLRRP). A helical; Signal-anchor for type II membrane protein membrane pass occupies residues 9–27 (FAVLLFVVLCAAASFPSVL). At 28–393 (RRSVGPAPVL…IAVPPVVFYH (366 aa)) the chain is on the lumenal side. Asn49, Asn212, and Asn258 each carry an N-linked (GlcNAc...) asparagine glycan.

The protein belongs to the glycosyltransferase 29 family.

The protein resides in the golgi apparatus membrane. Its function is as follows. Possesses sialyltransferase-like activity in vitro. Transfers sialic acid to the oligosaccharide Gal-beta-1,3-GalNAc and to glycoproteins such as asialofetuin, alpha-1-acid glycoprotein (NeuAc-alpha-2,3-Gal-beta-1,3-GalNAc-) and andasialo-alpha-1-acid glycoprotein. The transferred sialic acid is linked to galactose of Gal-beta-1,3-GalNAc through alpha-2,6-linkage. The protein is Sialyltransferase-like protein 1 of Oryza sativa subsp. indica (Rice).